A 75-amino-acid polypeptide reads, in one-letter code: Xibalbin-13 2 (75 aa).

A signal peptide spans 1-27; it reads MKEANTRRYIYLCLVVVLLSIIITTEA. Positions 28–30 are excised as a propeptide; that stretch reads EDD. 4 disulfide bridges follow: Cys-34–Cys-49, Cys-41–Cys-54, Cys-48–Cys-65, and Cys-56–Cys-63.

The protein belongs to the xibalbin-13 family. In terms of tissue distribution, expressed by the venom gland and the whole body.

It localises to the secreted. In terms of biological role, probable neurotoxin. Strongly inhibits voltage-gated potassium channels (Kv1.1/KCNA1, Kv1.2/KCNA2, Kv1.3/KCNA3, and Kv1.6/KCNA6, with the highest toxicity against Kv1.1 (85.1% inhibition at 1 uM)) and mildly inhibits sodium channels (Nav1.2/SCN2A, Nav1.4/SCN4A, Nav1.5/SCN5A, Nav1.6/SCN8A, and BgNav). Induces activation of protein kinase A type II (PKA-II) and MAP kinase Erk1/2 in primary nociceptive and non-nociceptive sensory neurons. Does not show cytotoxic activity. Does not have an impact on Ca2+, cAMP, and NO signaling in the cell types analyzed. Does not interfere with the adhesion of leukocytes to endothelial cells. This is Xibalbin-13 2 from Xibalbanus tulumensis (Blind cave remipede).